The sequence spans 188 residues: Accessory gene regulator protein B (188 aa).

Transmembrane regions (helical) follow at residues 49-69, 104-126, 143-163, and 166-186; these read LALL…FLTL, ISFQ…YAPA, IKSI…PPPY, and FVVY…SIKE.

The protein belongs to the AgrB family.

Its subcellular location is the cell membrane. Its function is as follows. Essential for the production of a quorum sensing system signal molecule, the autoinducing peptide (AIP). This quorum sensing system is responsible for the regulation of the expression of virulence factor genes. Involved in the proteolytic processing of AgrD, the precursor of AIP. The sequence is that of Accessory gene regulator protein B from Staphylococcus intermedius.